The sequence spans 1218 residues: Thrombospondin type 1 domain-containing protein (1218 aa).

Disordered regions lie at residues 82-101 (SAGF…PCSS), 189-240 (SLEE…SRTR), 298-383 (HTAN…VNGL), and 445-471 (GGKS…SHRG). The span at 201-210 (GYEEERERRS) shows a compositional bias: basic and acidic residues. Residues 315–375 (SSRFTSKASS…SSPLSSSPDS (61 aa)) are compositionally biased toward low complexity. The 67-residue stretch at 638-704 (SCITGPWSEW…RRKCNLGACP (67 aa)) folds into the TSP type-1 domain. Residues 886 to 906 (GVSHLWISLCAGAVAAVVFLV) form a helical membrane-spanning segment. The interval 1129–1153 (RRRARRGRREGDSGEGGDCGEARKA) is disordered.

Component of a complex, at least composed of cysteine repeat modular protein A (CRMPa), cysteine repeat modular protein B (CRMPb), micronemal protein 15 (MIC15) and thrombospondin type 1 domain-containing protein (TSP1).

It is found in the membrane. Required for rhoptry secretion. Plays a role in host cell invasion. This Toxoplasma gondii protein is Thrombospondin type 1 domain-containing protein.